The chain runs to 247 residues: 3-deoxy-manno-octulosonate cytidylyltransferase (247 aa).

This sequence belongs to the KdsB family.

It localises to the cytoplasm. It carries out the reaction 3-deoxy-alpha-D-manno-oct-2-ulosonate + CTP = CMP-3-deoxy-beta-D-manno-octulosonate + diphosphate. Its pathway is nucleotide-sugar biosynthesis; CMP-3-deoxy-D-manno-octulosonate biosynthesis; CMP-3-deoxy-D-manno-octulosonate from 3-deoxy-D-manno-octulosonate and CTP: step 1/1. The protein operates within bacterial outer membrane biogenesis; lipopolysaccharide biosynthesis. Functionally, activates KDO (a required 8-carbon sugar) for incorporation into bacterial lipopolysaccharide in Gram-negative bacteria. This Methylorubrum extorquens (strain CM4 / NCIMB 13688) (Methylobacterium extorquens) protein is 3-deoxy-manno-octulosonate cytidylyltransferase.